We begin with the raw amino-acid sequence, 233 residues long: Zinc import ATP-binding protein ZnuC (233 aa).

Residues 6 to 222 (IEFRNVSKKF…SEFSNALSSL (217 aa)) form the ABC transporter domain. 38-45 (GPNGAGKT) provides a ligand contact to ATP.

This sequence belongs to the ABC transporter superfamily. Zinc importer (TC 3.A.1.15.5) family. The complex is composed of two ATP-binding proteins (ZnuC), two transmembrane proteins (ZnuB) and a solute-binding protein (ZnuA).

It is found in the cell inner membrane. It catalyses the reaction Zn(2+)(out) + ATP(in) + H2O(in) = Zn(2+)(in) + ADP(in) + phosphate(in) + H(+)(in). Its function is as follows. Part of the ABC transporter complex ZnuABC involved in zinc import. Responsible for energy coupling to the transport system. The chain is Zinc import ATP-binding protein ZnuC from Rickettsia prowazekii (strain Madrid E).